Consider the following 309-residue polypeptide: 4-diphosphocytidyl-2-C-methyl-D-erythritol kinase (309 aa).

Residue Lys-11 is part of the active site. 94-104 (PVAAGLAGGSA) serves as a coordination point for ATP. Asp-136 is an active-site residue.

This sequence belongs to the GHMP kinase family. IspE subfamily.

It catalyses the reaction 4-CDP-2-C-methyl-D-erythritol + ATP = 4-CDP-2-C-methyl-D-erythritol 2-phosphate + ADP + H(+). It functions in the pathway isoprenoid biosynthesis; isopentenyl diphosphate biosynthesis via DXP pathway; isopentenyl diphosphate from 1-deoxy-D-xylulose 5-phosphate: step 3/6. In terms of biological role, catalyzes the phosphorylation of the position 2 hydroxy group of 4-diphosphocytidyl-2C-methyl-D-erythritol. This is 4-diphosphocytidyl-2-C-methyl-D-erythritol kinase from Synechococcus sp. (strain JA-3-3Ab) (Cyanobacteria bacterium Yellowstone A-Prime).